A 146-amino-acid chain; its full sequence is Cytochrome c-type biogenesis protein CcmE (146 aa).

The Cytoplasmic segment spans residues 1-8 (MNPRRKKR). Residues 9–29 (LGLILALVLGASATVGLMLYA) form a helical; Signal-anchor for type II membrane protein membrane-spanning segment. At 30–146 (LNQNMDLFYT…EVAEAMKKTH (117 aa)) the chain is on the periplasmic side. Residues H129 and Y133 each coordinate heme.

This sequence belongs to the CcmE/CycJ family.

The protein resides in the cell inner membrane. In terms of biological role, heme chaperone required for the biogenesis of c-type cytochromes. Transiently binds heme delivered by CcmC and transfers the heme to apo-cytochromes in a process facilitated by CcmF and CcmH. This is Cytochrome c-type biogenesis protein CcmE from Aliivibrio salmonicida (strain LFI1238) (Vibrio salmonicida (strain LFI1238)).